The sequence spans 274 residues: 2-dehydro-3-deoxyphosphooctonate aldolase (274 aa).

The protein belongs to the KdsA family.

The protein localises to the cytoplasm. The catalysed reaction is D-arabinose 5-phosphate + phosphoenolpyruvate + H2O = 3-deoxy-alpha-D-manno-2-octulosonate-8-phosphate + phosphate. Its pathway is carbohydrate biosynthesis; 3-deoxy-D-manno-octulosonate biosynthesis; 3-deoxy-D-manno-octulosonate from D-ribulose 5-phosphate: step 2/3. It participates in bacterial outer membrane biogenesis; lipopolysaccharide biosynthesis. In Legionella pneumophila (strain Corby), this protein is 2-dehydro-3-deoxyphosphooctonate aldolase.